The following is a 357-amino-acid chain: Gene 58 protein (357 aa).

Belongs to the herpesviridae BMRF2 family.

This Saimiri sciureus (Common squirrel monkey) protein is Gene 58 protein (58).